The primary structure comprises 215 residues: Pyridoxine/pyridoxamine 5'-phosphate oxidase (215 aa).

Residues 9 to 12 and K69 each bind substrate; that span reads RRDY. Residues 64–69, 79–80, K86, and Q108 each bind FMN; these read RVLLLK and FT. Positions 126, 130, and 134 each coordinate substrate. Residues 143–144 and W188 contribute to the FMN site; that span reads QS. A substrate-binding site is contributed by 194–196; that stretch reads RLH. R198 contributes to the FMN binding site.

It belongs to the pyridoxamine 5'-phosphate oxidase family. In terms of assembly, homodimer. The cofactor is FMN.

It carries out the reaction pyridoxamine 5'-phosphate + O2 + H2O = pyridoxal 5'-phosphate + H2O2 + NH4(+). It catalyses the reaction pyridoxine 5'-phosphate + O2 = pyridoxal 5'-phosphate + H2O2. It participates in cofactor metabolism; pyridoxal 5'-phosphate salvage; pyridoxal 5'-phosphate from pyridoxamine 5'-phosphate: step 1/1. It functions in the pathway cofactor metabolism; pyridoxal 5'-phosphate salvage; pyridoxal 5'-phosphate from pyridoxine 5'-phosphate: step 1/1. In terms of biological role, catalyzes the oxidation of either pyridoxine 5'-phosphate (PNP) or pyridoxamine 5'-phosphate (PMP) into pyridoxal 5'-phosphate (PLP). This chain is Pyridoxine/pyridoxamine 5'-phosphate oxidase, found in Pseudomonas savastanoi pv. phaseolicola (strain 1448A / Race 6) (Pseudomonas syringae pv. phaseolicola (strain 1448A / Race 6)).